Consider the following 390-residue polypeptide: Acetylornithine aminotransferase (390 aa).

Pyridoxal 5'-phosphate contacts are provided by residues 103–104 (GT) and F129. Residue R132 participates in N(2)-acetyl-L-ornithine binding. 214–217 (DEVQ) contacts pyridoxal 5'-phosphate. N6-(pyridoxal phosphate)lysine is present on K243. S271 is a N(2)-acetyl-L-ornithine binding site. Residue T272 participates in pyridoxal 5'-phosphate binding. K304 participates in a covalent cross-link: Isoglutamyl lysine isopeptide (Lys-Gln) (interchain with Q-Cter in protein Pup).

It belongs to the class-III pyridoxal-phosphate-dependent aminotransferase family. ArgD subfamily. Homodimer. Requires pyridoxal 5'-phosphate as cofactor.

It localises to the cytoplasm. It catalyses the reaction N(2)-acetyl-L-ornithine + 2-oxoglutarate = N-acetyl-L-glutamate 5-semialdehyde + L-glutamate. Its pathway is amino-acid biosynthesis; L-arginine biosynthesis; N(2)-acetyl-L-ornithine from L-glutamate: step 4/4. This Mycolicibacterium smegmatis (strain ATCC 700084 / mc(2)155) (Mycobacterium smegmatis) protein is Acetylornithine aminotransferase.